We begin with the raw amino-acid sequence, 289 residues long: D-psicose 3-epimerase (289 aa).

2 residues coordinate substrate: Tyr6 and Ala107. Glu150 (proton donor/acceptor) is an active-site residue. Glu150 is a Mn(2+) binding site. Residues Glu156 and 183-186 (DTFH) each bind substrate. Mn(2+) contacts are provided by Asp183 and His209. Arg215 contacts substrate. The Proton donor/acceptor role is filled by Glu244. Residue Glu244 coordinates Mn(2+).

The protein belongs to the hyi family. In terms of assembly, homotetramer. Requires Mn(2+) as cofactor. The cofactor is Co(2+).

The enzyme catalyses D-allulose = keto-D-fructose. Inhibited by Zn(2+) and Cu(2+). Functionally, involved in the biosynthesis of D-psicose. Catalyzes the reversible epimerization of D-fructose at the C3 position to yield D-psicose. The enzyme is highly specific for D-psicose and shows very low activity with D-tagatose. The substrate specificity decreases in the following order: D-fructose, D-tagatose, D-ribulose, D-xylulose, and D-sorbose. It shows a higher level of activity for cis ketoses than for trans-ketoses. This is D-psicose 3-epimerase (dpe) from Agrobacterium fabrum (strain C58 / ATCC 33970) (Agrobacterium tumefaciens (strain C58)).